The primary structure comprises 591 residues: F420 non-reducing hydrogenase II large subunit (591 aa).

Position 42 (E42) interacts with Mg(2+). Residues C61, C64, C569, and C572 each coordinate Ni(2+). C64 is a binding site for Fe cation. C572 lines the Fe cation pocket. H575 lines the Mg(2+) pocket.

It belongs to the [NiFe]/[NiFeSe] hydrogenase large subunit family. As to quaternary structure, composed of a large subunit (VhtA), a small subunit (VhtG) and a cytochrome subunit (VhtC). The cofactor is Ni(2+). Requires Fe cation as cofactor.

The protein resides in the cell membrane. It catalyses the reaction methanophenazine + H2 = dihydromethanophenazine. Functionally, part of the F420 non-reducing hydrogenase II complex that catalyzes the reduction of methanophenazine to dihydromethanophenazine. This is F420 non-reducing hydrogenase II large subunit from Methanosarcina mazei (strain ATCC BAA-159 / DSM 3647 / Goe1 / Go1 / JCM 11833 / OCM 88) (Methanosarcina frisia).